The chain runs to 120 residues: Ribonuclease P protein component (120 aa).

Belongs to the RnpA family. As to quaternary structure, consists of a catalytic RNA component (M1 or rnpB) and a protein subunit.

The catalysed reaction is Endonucleolytic cleavage of RNA, removing 5'-extranucleotides from tRNA precursor.. RNaseP catalyzes the removal of the 5'-leader sequence from pre-tRNA to produce the mature 5'-terminus. It can also cleave other RNA substrates such as 4.5S RNA. The protein component plays an auxiliary but essential role in vivo by binding to the 5'-leader sequence and broadening the substrate specificity of the ribozyme. This is Ribonuclease P protein component from Microcystis aeruginosa (strain NIES-843 / IAM M-2473).